The following is a 420-amino-acid chain: Glucose-1-phosphate adenylyltransferase (420 aa).

Alpha-D-glucose 1-phosphate is bound by residues Y107, G173, 188–189 (EK), and S206.

Belongs to the bacterial/plant glucose-1-phosphate adenylyltransferase family. Homotetramer.

The enzyme catalyses alpha-D-glucose 1-phosphate + ATP + H(+) = ADP-alpha-D-glucose + diphosphate. It functions in the pathway glycan biosynthesis; glycogen biosynthesis. Its function is as follows. Involved in the biosynthesis of ADP-glucose, a building block required for the elongation reactions to produce glycogen. Catalyzes the reaction between ATP and alpha-D-glucose 1-phosphate (G1P) to produce pyrophosphate and ADP-Glc. The sequence is that of Glucose-1-phosphate adenylyltransferase from Shewanella baltica (strain OS185).